We begin with the raw amino-acid sequence, 530 residues long: Histone-arginine methyltransferase CARMER (530 aa).

Residues alanine 141 to histidine 450 enclose the SAM-dependent MTase PRMT-type domain. Residues glutamine 154, arginine 163, glycine 187, glutamate 209, glutamate 238, and threonine 266 each coordinate S-adenosyl-L-methionine. Residue arginine 501 is modified to Asymmetric dimethylarginine; by autocatalysis.

It belongs to the class I-like SAM-binding methyltransferase superfamily. Protein arginine N-methyltransferase family. In terms of assembly, homodimer. In terms of processing, the dimethylated protein is the major form.

The protein resides in the cytoplasm. It localises to the nucleus. The enzyme catalyses L-arginyl-[protein] + 2 S-adenosyl-L-methionine = N(omega),N(omega)-dimethyl-L-arginyl-[protein] + 2 S-adenosyl-L-homocysteine + 2 H(+). Functionally, methylates (mono- and asymmetric dimethylation) the guanidino nitrogens of arginyl residues in proteins. May methylate histone H3 at 'Arg-17' and activate transcription via chromatin remodeling. This is Histone-arginine methyltransferase CARMER (Art4) from Drosophila sechellia (Fruit fly).